Reading from the N-terminus, the 317-residue chain is Melanocyte-stimulating hormone receptor (317 aa).

Topologically, residues methionine 1–glutamate 37 are extracellular. An N-linked (GlcNAc...) asparagine glycan is attached at asparagine 29. The helical transmembrane segment at valine 38–isoleucine 63 threads the bilayer. Over alanine 64–proline 72 the chain is Cytoplasmic. The chain crosses the membrane as a helical span at residues methionine 73–leucine 93. Topologically, residues glutamate 94–asparagine 118 are extracellular. The chain crosses the membrane as a helical span at residues threonine 119 to valine 140. Residues aspartate 141–arginine 163 are Cytoplasmic-facing. Residues alanine 164–cysteine 183 traverse the membrane as a helical segment. Topologically, residues aspartate 184–cysteine 191 are extracellular. The chain crosses the membrane as a helical span at residues leucine 192–leucine 211. The Cytoplasmic segment spans residues alanine 212 to alanine 240. Residues alanine 241–leucine 266 form a helical membrane-spanning segment. The Extracellular portion of the chain corresponds to cysteine 267 to asparagine 279. A helical transmembrane segment spans residues phenylalanine 280–phenylalanine 300. Residues arginine 301–tryptophan 317 lie on the Cytoplasmic side of the membrane. The S-palmitoyl cysteine moiety is linked to residue cysteine 315.

Belongs to the G-protein coupled receptor 1 family. As to quaternary structure, interacts with MGRN1, but does not undergo MGRN1-mediated ubiquitination; this interaction competes with GNAS-binding and thus inhibits agonist-induced cAMP production. Interacts with OPN3; the interaction results in a decrease in MC1R-mediated cAMP signaling and ultimately a decrease in melanin production in melanocytes.

It localises to the cell membrane. Its function is as follows. Receptor for MSH (alpha, beta and gamma) and ACTH. The activity of this receptor is mediated by G proteins which activate adenylate cyclase. Mediates melanogenesis, the production of eumelanin (black/brown) and phaeomelanin (red/yellow), via regulation of cAMP signaling in melanocytes. This is Melanocyte-stimulating hormone receptor (MC1R) from Alouatta caraya (Black howler monkey).